Reading from the N-terminus, the 179-residue chain is Large ribosomal subunit protein uL5 (179 aa).

This sequence belongs to the universal ribosomal protein uL5 family. As to quaternary structure, part of the 50S ribosomal subunit; part of the 5S rRNA/L5/L18/L25 subcomplex. Contacts the 5S rRNA and the P site tRNA. Forms a bridge to the 30S subunit in the 70S ribosome.

In terms of biological role, this is one of the proteins that bind and probably mediate the attachment of the 5S RNA into the large ribosomal subunit, where it forms part of the central protuberance. In the 70S ribosome it contacts protein S13 of the 30S subunit (bridge B1b), connecting the 2 subunits; this bridge is implicated in subunit movement. Contacts the P site tRNA; the 5S rRNA and some of its associated proteins might help stabilize positioning of ribosome-bound tRNAs. In Alkalilimnicola ehrlichii (strain ATCC BAA-1101 / DSM 17681 / MLHE-1), this protein is Large ribosomal subunit protein uL5.